Consider the following 412-residue polypeptide: Dihydrolipoyllysine-residue acetyltransferase component of pyruvate dehydrogenase complex (412 aa).

Residues 2-78 form the Lipoyl-binding domain; that stretch reads PIKILMPALS…PVNSLIAVLS (77 aa). Lys43 carries the N6-lipoyllysine modification. A Peripheral subunit-binding (PSBD) domain is found at 132-169; that stretch reads FASPLAKRLAKMRNIRFESVKGSGPHGRIVKQDILSYT. Residue His385 is part of the active site.

The protein belongs to the 2-oxoacid dehydrogenase family. In terms of assembly, forms a 24-polypeptide structural core with octahedral symmetry. (R)-lipoate is required as a cofactor.

The catalysed reaction is N(6)-[(R)-dihydrolipoyl]-L-lysyl-[protein] + acetyl-CoA = N(6)-[(R)-S(8)-acetyldihydrolipoyl]-L-lysyl-[protein] + CoA. Functionally, the pyruvate dehydrogenase complex catalyzes the overall conversion of pyruvate to acetyl-CoA and CO(2). It contains multiple copies of three enzymatic components: pyruvate dehydrogenase (E1), dihydrolipoamide acetyltransferase (E2) and lipoamide dehydrogenase (E3). The polypeptide is Dihydrolipoyllysine-residue acetyltransferase component of pyruvate dehydrogenase complex (pdhC) (Rickettsia conorii (strain ATCC VR-613 / Malish 7)).